A 415-amino-acid chain; its full sequence is Phosphoglycerate kinase (415 aa).

(2R)-3-phosphoglycerate contacts are provided by V22, D23, F24, N25, Q37, R38, S61, H62, G64, R65, R121, H168, and R169. Residue G212 participates in ADP binding. Position 212 (G212) interacts with CDP. AMP-binding residues include A213 and K214. A213 contributes to the ATP binding site. Position 213 (A213) interacts with Mg(2+). A216 and D217 together coordinate Mg(2+). Residue D217 coordinates CDP. K218 serves as a coordination point for AMP. Residue K218 participates in ATP binding. G236 serves as a coordination point for ADP. Position 236 (G236) interacts with CDP. 2 residues coordinate AMP: G237 and G311. The ATP site is built by G237 and G311. CDP-binding residues include G336 and F341. F341 contributes to the ADP binding site. Residue E342 coordinates AMP. ATP is bound by residues E342, D373, and T374. D373 lines the Mg(2+) pocket.

The protein belongs to the phosphoglycerate kinase family. Monomer. It depends on Mg(2+) as a cofactor.

Its subcellular location is the cytoplasm. The catalysed reaction is (2R)-3-phosphoglycerate + ATP = (2R)-3-phospho-glyceroyl phosphate + ADP. The protein operates within carbohydrate degradation; glycolysis; pyruvate from D-glyceraldehyde 3-phosphate: step 2/5. In terms of biological role, enzyme of the glycolytic pathway. Glycolysis is essential in glial cells but not in neurons; neurons rely on the citric acid cycle for their energy needs, and on lactate and alanine secreted into the hemolymph by glial cells to fuel it. In Drosophila melanogaster (Fruit fly), this protein is Phosphoglycerate kinase.